The following is a 170-amino-acid chain: Cathelicidin antimicrobial peptide (170 aa).

The signal sequence occupies residues 1 to 30; it reads MDTQRDSPSLGRWSLVLLLLGLVMPLAIVA. Positions 31 to 131 are cleaved as a propeptide — cathelin-like domain (CLD); it reads QVLSYQEAVL…DISCDKDNRR (101 aa). Cystine bridges form between Cys86/Cys97 and Cys108/Cys125. The interval 150–162 is active core; it reads FKRIVQRIKDFLQ.

It belongs to the cathelicidin family. Monomer, homodimer or homotrimer (in vitro). Oligomerizes as tetra- or hexamer in solution (in vitro). Proteolytically cleaved by proteinase PRTN3 into antibacterial peptide LL-37. Proteolytically cleaved by cathepsin CTSG and neutrophil elastase ELANE. Post-translationally, resistant to proteolytic degradation in solution, and when bound to both zwitterionic (mimicking mammalian membranes) and negatively charged membranes (mimicking bacterial membranes). In terms of processing, after secretion onto the skin surface, the CAMP gene product is processed by a serine protease-dependent mechanism into multiple novel antimicrobial peptides distinct from and shorter than cathelicidin LL-37. These peptides show enhanced antimicrobial action, acquiring the ability to kill skin pathogens such as S.aureus, E.coli and C.albicans. These peptides have lost the ability to stimulate CXCL8/IL8 release from keratinocytes. The peptides act synergistically, killing bacteria at lower concentrations when present together, and maintain activity at increased salt condition.

It is found in the secreted. The protein localises to the vesicle. Its function is as follows. Antimicrobial protein that is an integral component of the innate immune system. Binds to bacterial lipopolysaccharides (LPS). Acts via neutrophil N-formyl peptide receptors to enhance the release of CXCL2. Postsecretory processing generates multiple cathelicidin antimicrobial peptides with various lengths which act as a topical antimicrobial defense in sweat on skin. The unprocessed precursor form, cathelicidin antimicrobial peptide, inhibits the growth of Gram-negative E.coli and E.aerogenes with efficiencies comparable to that of the mature peptide LL-37 (in vitro). Antimicrobial peptide that is an integral component of the innate immune system. Binds to bacterial lipopolysaccharides (LPS). Causes membrane permeabilization by forming transmembrane pores (in vitro). Causes lysis of E.coli. Exhibits antimicrobial activity against Gram-negative bacteria such as P.aeruginosa, S.typhimurium, E.aerogenes, E.coli and P.syringae, Gram-positive bacteria such as L.monocytogenes, S.epidermidis, S.pyogenes and S.aureus, as well as vancomycin-resistant enterococci (in vitro). Exhibits antimicrobial activity against methicillin-resistant S.aureus, P.mirabilis, and C.albicans in low-salt media, but not in media containing 100 mM NaCl (in vitro). Forms chiral supramolecular assemblies with quinolone signal (PQS) molecules of P.aeruginosa, which may lead to interference of bacterial quorum signaling and perturbance of bacterial biofilm formation. May form supramolecular fiber-like assemblies on bacterial membranes. Induces cytokine and chemokine producation as well as TNF/TNFA and CSF2/GMCSF production in normal human keratinocytes. Exhibits hemolytic activity against red blood cells. Functionally, exhibits antimicrobial activity against E.coli and B.megaterium (in vitro). The chain is Cathelicidin antimicrobial peptide from Nomascus leucogenys (Northern white-cheeked gibbon).